The primary structure comprises 380 residues: PqqA peptide cyclase (380 aa).

In terms of domain architecture, Radical SAM core spans 8 to 223 (VNPPLWLLAE…VADYRQKMAA (216 aa)). [4Fe-4S] cluster-binding residues include Cys-22, Cys-26, and Cys-29.

This sequence belongs to the radical SAM superfamily. PqqE family. In terms of assembly, interacts with PqqD. The interaction is necessary for activity of PqqE. It depends on [4Fe-4S] cluster as a cofactor.

It catalyses the reaction [PQQ precursor protein] + S-adenosyl-L-methionine = E-Y cross-linked-[PQQ precursor protein] + 5'-deoxyadenosine + L-methionine + H(+). Its pathway is cofactor biosynthesis; pyrroloquinoline quinone biosynthesis. Its function is as follows. Catalyzes the cross-linking of a glutamate residue and a tyrosine residue in the PqqA protein as part of the biosynthesis of pyrroloquinoline quinone (PQQ). The polypeptide is PqqA peptide cyclase (Klebsiella pneumoniae (strain 342)).